The primary structure comprises 104 residues: Pterin-4-alpha-carbinolamine dehydratase (104 aa).

Position 2 is an N-acetylalanine (A2). Residues 61–63 and 78–81 each bind substrate; these read DHH and STHE.

The protein belongs to the pterin-4-alpha-carbinolamine dehydratase family. In terms of assembly, homotetramer and homodimer. In terms of tissue distribution, the major tissues expressing cDcoH are hypothalamus, kidney and liver.

The protein resides in the cytoplasm. It localises to the nucleus. The enzyme catalyses (4aS,6R)-4a-hydroxy-L-erythro-5,6,7,8-tetrahydrobiopterin = (6R)-L-erythro-6,7-dihydrobiopterin + H2O. In terms of biological role, involved in tetrahydrobiopterin biosynthesis. Seems to both prevent the formation of 7-pterins and accelerate the formation of quinonoid-BH2. Coactivator for HNF1A-dependent transcription. Regulates the dimerization of homeodomain protein HNF1A and enhances its transcriptional activity. Also acts as a coactivator for HNF1B-dependent transcription. The chain is Pterin-4-alpha-carbinolamine dehydratase (PCBD1) from Gallus gallus (Chicken).